The primary structure comprises 285 residues: uncharacterized protein (285 aa).

The Guanylate cyclase domain maps to 92-199; the sequence is TLLLADVEES…PTINRTARLR (108 aa).

Belongs to the adenylyl cyclase class-4/guanylyl cyclase family.

This is an uncharacterized protein from Mycobacterium tuberculosis (strain ATCC 25618 / H37Rv).